We begin with the raw amino-acid sequence, 182 residues long: Transmembrane and coiled-coil domain-containing protein 2 (182 aa).

Residues V51–W71 form a helical membrane-spanning segment. A coiled-coil region spans residues G124–K151.

It is found in the membrane. This is Transmembrane and coiled-coil domain-containing protein 2 (TMCO2) from Homo sapiens (Human).